Reading from the N-terminus, the 204-residue chain is Tumor necrosis factor receptor superfamily member 26 (204 aa).

The signal sequence occupies residues 1–19; that stretch reads MTRLRLLLLLGLLLRVAVC. At 20–164 the chain is on the extracellular side; sequence SVNTITLCKI…SQCFCFSKPL (145 aa). Intrachain disulfides connect Cys-27-Cys-38, Cys-39-Cys-52, Cys-42-Cys-61, Cys-64-Cys-79, Cys-82-Cys-95, Cys-85-Cys-103, Cys-105-Cys-120, Cys-123-Cys-135, and Cys-126-Cys-143. TNFR-Cys repeat units lie at residues 27-61, 63-103, and 104-143; these read CKIG…KSEC, PCDS…DRVC, and QCKQ…DTVC. A glycan (N-linked (GlcNAc...) asparagine) is linked at Asn-57. An N-linked (GlcNAc...) asparagine glycan is attached at Asn-136. A helical transmembrane segment spans residues 165–185; that stretch reads GIVVIIAAFIIIIGAVIILIL. Topologically, residues 186 to 204 are cytoplasmic; the sequence is KIICYCKRGENIQLSSTML.

In terms of tissue distribution, expressed in thymus and spleen. Detectable levels in lung.

Its subcellular location is the membrane. This chain is Tumor necrosis factor receptor superfamily member 26 (Tnfrsf26), found in Mus musculus (Mouse).